Consider the following 314-residue polypeptide: Ribosomal protein uL3 glutamine methyltransferase (314 aa).

This sequence belongs to the protein N5-glutamine methyltransferase family. PrmB subfamily.

The enzyme catalyses L-glutaminyl-[ribosomal protein uL3] + S-adenosyl-L-methionine = N(5)-methyl-L-glutaminyl-[ribosomal protein uL3] + S-adenosyl-L-homocysteine + H(+). Its function is as follows. Methylates large ribosomal subunit protein uL3 on a specific glutamine residue. In Haemophilus influenzae (strain ATCC 51907 / DSM 11121 / KW20 / Rd), this protein is Ribosomal protein uL3 glutamine methyltransferase.